A 511-amino-acid chain; its full sequence is Signal transduction histidine-protein kinase/phosphatase MprB (511 aa).

Over 1 to 26 (MVGFRRGPRAPLRATSSLSLRWRVML) the chain is Cytoplasmic. Residues 27–47 (LAMSMVAMVVVLMSFAVYAVI) traverse the membrane as a helical segment. Residues 48-163 (SAALYSDIDN…PTEAVMTKLR (116 aa)) lie on the Extracellular side of the membrane. A helical membrane pass occupies residues 164 to 184 (AVLLIVGGVGVAVAAVAGGMV). The Cytoplasmic segment spans residues 185–511 (TRAGLRPVGR…SVDSQSARAR (327 aa)). The region spanning 186-238 (RAGLRPVGRLTEAAERVARTDDLRPIPVFGSDELARLTEAFNLMLRALAESRE) is the HAMP domain. The region spanning 246-466 (DAGHELRTPL…AICMLLPGRP (221 aa)) is the Histidine kinase domain. Position 249 is a phosphohistidine; by autocatalysis (His-249). Positions 468–511 (PDSAYPAAPDDKKTEPVDTRGANGANSRGSANVISVDSQSARAR) are disordered. Positions 476 to 485 (PDDKKTEPVD) are enriched in basic and acidic residues. Residues 491–511 (GANSRGSANVISVDSQSARAR) are compositionally biased toward polar residues.

It depends on Mg(2+) as a cofactor. Mn(2+) is required as a cofactor. Autophosphorylated.

It localises to the cell membrane. It carries out the reaction ATP + protein L-histidine = ADP + protein N-phospho-L-histidine.. In terms of biological role, member of the two-component regulatory system MprB/MprA which contributes to maintaining a balance among several systems involved in stress resistance and is required for establishment and maintenance of persistent infection in the host. In response to environmental signals MprB acts both as a membrane-associated protein kinase that undergoes autophosphorylation and subsequently transfers the phosphate to MprA, and a protein phosphatase that dephosphorylates phospho-MprA. This Mycobacterium ulcerans (strain Agy99) protein is Signal transduction histidine-protein kinase/phosphatase MprB (mprB).